Here is a 210-residue protein sequence, read N- to C-terminus: Cell division protein SepF (210 aa).

Low complexity-rich tracts occupy residues Q36–Q47 and R59–S69. Disordered stretches follow at residues Q36–S69 and N182–Q210.

Belongs to the SepF family. Homodimer. Interacts with FtsZ.

The protein localises to the cytoplasm. In terms of biological role, cell division protein that is part of the divisome complex and is recruited early to the Z-ring. Probably stimulates Z-ring formation, perhaps through the cross-linking of FtsZ protofilaments. Its function overlaps with FtsA. The polypeptide is Cell division protein SepF (Trichodesmium erythraeum (strain IMS101)).